A 263-amino-acid polypeptide reads, in one-letter code: tRNA1(Val) (adenine(37)-N6)-methyltransferase (263 aa).

This sequence belongs to the methyltransferase superfamily. tRNA (adenine-N(6)-)-methyltransferase family.

Its subcellular location is the cytoplasm. The catalysed reaction is adenosine(37) in tRNA1(Val) + S-adenosyl-L-methionine = N(6)-methyladenosine(37) in tRNA1(Val) + S-adenosyl-L-homocysteine + H(+). Functionally, specifically methylates the adenine in position 37 of tRNA(1)(Val) (anticodon cmo5UAC). The protein is tRNA1(Val) (adenine(37)-N6)-methyltransferase of Salmonella choleraesuis (strain SC-B67).